Here is a 321-residue protein sequence, read N- to C-terminus: Tetraketide alpha-pyrone reductase 2 (321 aa).

The residue at position 2 (Ser2) is an N-acetylserine. NADP(+) contacts are provided by residues 4-28 (YLVT…GHTV), Lys40, and Tyr160.

This sequence belongs to the NAD(P)-dependent epimerase/dehydratase family. Dihydroflavonol-4-reductase subfamily.

The protein localises to the cytoplasm. May be involved in the biosynthesis of hydroxylated tetraketide compounds that serve as sporopollenin precursors (the main constituents of exine). Acts on tetraketide alpha-pyrones and reduces the carbonyl function on the tetraketide alkyl chain to a secondary alcohol function. The polypeptide is Tetraketide alpha-pyrone reductase 2 (TKPR2) (Arabidopsis thaliana (Mouse-ear cress)).